Consider the following 360-residue polypeptide: S-adenosylmethionine decarboxylase proenzyme (360 aa).

Residues Glu-13 and Glu-16 contribute to the active site. Residue Ser-73 is the Schiff-base intermediate with substrate; via pyruvic acid of the active site. Residue Ser-73 is modified to Pyruvic acid (Ser); by autocatalysis. Catalysis depends on Cys-87, which acts as the Proton donor; for catalytic activity. Catalysis depends on proton acceptor; for processing activity residues Ser-236 and His-249.

Belongs to the eukaryotic AdoMetDC family. It depends on pyruvate as a cofactor. In terms of processing, is synthesized initially as an inactive proenzyme. Formation of the active enzyme involves a self-maturation process in which the active site pyruvoyl group is generated from an internal serine residue via an autocatalytic post-translational modification. Two non-identical subunits are generated from the proenzyme in this reaction, and the pyruvate is formed at the N-terminus of the alpha chain, which is derived from the carboxyl end of the proenzyme. The post-translation cleavage follows an unusual pathway, termed non-hydrolytic serinolysis, in which the side chain hydroxyl group of the serine supplies its oxygen atom to form the C-terminus of the beta chain, while the remainder of the serine residue undergoes an oxidative deamination to produce ammonia and the pyruvoyl group blocking the N-terminus of the alpha chain. As to expression, stolon, also expressed in leaves, stems and roots.

It catalyses the reaction S-adenosyl-L-methionine + H(+) = S-adenosyl 3-(methylsulfanyl)propylamine + CO2. It participates in amine and polyamine biosynthesis; S-adenosylmethioninamine biosynthesis; S-adenosylmethioninamine from S-adenosyl-L-methionine: step 1/1. The sequence is that of S-adenosylmethionine decarboxylase proenzyme (SAMDC) from Solanum tuberosum (Potato).